Consider the following 455-residue polypeptide: Indoleacetamide hydrolase (455 aa).

Catalysis depends on charge relay system residues K71 and S146. Residue S170 is the Acyl-ester intermediate of the active site.

This sequence belongs to the amidase family.

It participates in plant hormone metabolism; auxin biosynthesis. Hydrolyzes indole-3-acetamide (IAM) into indole-3-acetic acid (IAA). The protein is Indoleacetamide hydrolase (iaaH) of Pseudomonas savastanoi (Pseudomonas syringae pv. savastanoi).